Reading from the N-terminus, the 455-residue chain is Gastric inhibitory polypeptide receptor (455 aa).

A signal peptide spans 1 to 18 (MPLRLLLLLLWLWGLSLQ). Residues 19 to 135 (RAETDSEGQT…DQKLILERLQ (117 aa)) are Extracellular-facing. Cystine bridges form between Cys-43/Cys-67, Cys-58/Cys-100, and Cys-81/Cys-115. 3 N-linked (GlcNAc...) asparagine glycosylation sites follow: Asn-59, Asn-69, and Asn-74. The chain crosses the membrane as a helical span at residues 136–158 (VVYTVGYSLSLATLLLALLILSL). Residues 159–166 (FRRLHCTR) are Cytoplasmic-facing. The chain crosses the membrane as a helical span at residues 167–186 (NYIHMNLFTSFMLRAGAILT). The Extracellular portion of the chain corresponds to 187–214 (RDQLLPPLGPYTGNQTPTLWNQALAACR). A helical transmembrane segment spans residues 215-239 (TAQILTQYCVGANYTWLLVEGVYLH). Topologically, residues 240 to 251 (HLLVVVRRSEKG) are cytoplasmic. The helical transmembrane segment at 252–275 (HFRCYLLLGWGAPALFVIPWVIVR) threads the bilayer. At 276–290 (YLYENTQCWERNEVK) the chain is on the extracellular side. A helical membrane pass occupies residues 291-316 (AIWWIIRTPILITILINFLIFIRILG). The Cytoplasmic portion of the chain corresponds to 317 to 338 (ILVSKLRTRQMRCPDYRLRLAR). Residues 339-359 (STLTLMPLLGVHEVVFAPVTE) form a helical membrane-spanning segment. The Extracellular portion of the chain corresponds to 360–374 (EQAEGSLRFAKLAFE). The chain crosses the membrane as a helical span at residues 375 to 395 (IFLSSFQGFLVSVLYCFINKE). The Cytoplasmic segment spans residues 396–455 (VQSEIRRLRLSLQEQCPRPHLGQAPRAVPLSSAPQEAAIRNALPSGMLHVPGDEVLESYC).

Belongs to the G-protein coupled receptor 2 family. May form homodimers and heterodimers with GLP1R. In terms of processing, N-glycosylation is required for cell surface expression and lengthens receptor half-life by preventing degradation in the ER. Present in the pancreas as well as the gut, adipose tissue, heart, pituitary, and inner layers of the adrenal cortex, whereas it is not found in kidney, spleen, or liver. It is also expressed in several brain regions, including the cerebral cortex, hippocampus, and olfactory bulb.

The protein localises to the cell membrane. Functionally, this is a receptor for GIP. The activity of this receptor is mediated by G proteins which activate adenylyl cyclase. This chain is Gastric inhibitory polypeptide receptor (Gipr), found in Rattus norvegicus (Rat).